A 341-amino-acid polypeptide reads, in one-letter code: S-adenosylmethionine:tRNA ribosyltransferase-isomerase (341 aa).

This sequence belongs to the QueA family. Monomer.

It is found in the cytoplasm. The enzyme catalyses 7-aminomethyl-7-carbaguanosine(34) in tRNA + S-adenosyl-L-methionine = epoxyqueuosine(34) in tRNA + adenine + L-methionine + 2 H(+). It functions in the pathway tRNA modification; tRNA-queuosine biosynthesis. In terms of biological role, transfers and isomerizes the ribose moiety from AdoMet to the 7-aminomethyl group of 7-deazaguanine (preQ1-tRNA) to give epoxyqueuosine (oQ-tRNA). This Clostridium kluyveri (strain NBRC 12016) protein is S-adenosylmethionine:tRNA ribosyltransferase-isomerase.